The primary structure comprises 316 residues: Probable cell division protein WhiA (316 aa).

Positions 276–309 form a DNA-binding region, H-T-H motif; it reads SLEELGKIAEPQITKDAIAGRIRRLLQLAEKTEK.

This sequence belongs to the WhiA family.

Its function is as follows. Involved in cell division and chromosome segregation. The sequence is that of Probable cell division protein WhiA from Bifidobacterium longum subsp. infantis (strain ATCC 15697 / DSM 20088 / JCM 1222 / NCTC 11817 / S12).